The chain runs to 523 residues: 2-isopropylmalate synthase (523 aa).

A Pyruvate carboxyltransferase domain is found at 5 to 267; the sequence is VIIFDTTLRD…HTAINHQEIW (263 aa). Mn(2+)-binding residues include D14, H202, H204, and N238. Residues 392–523 are regulatory domain; the sequence is RLDYFSVQSG…QHNENNKETV (132 aa).

This sequence belongs to the alpha-IPM synthase/homocitrate synthase family. LeuA type 1 subfamily. As to quaternary structure, homodimer. Mn(2+) serves as cofactor.

It is found in the cytoplasm. The catalysed reaction is 3-methyl-2-oxobutanoate + acetyl-CoA + H2O = (2S)-2-isopropylmalate + CoA + H(+). The protein operates within amino-acid biosynthesis; L-leucine biosynthesis; L-leucine from 3-methyl-2-oxobutanoate: step 1/4. Catalyzes the condensation of the acetyl group of acetyl-CoA with 3-methyl-2-oxobutanoate (2-ketoisovalerate) to form 3-carboxy-3-hydroxy-4-methylpentanoate (2-isopropylmalate). This chain is 2-isopropylmalate synthase, found in Shigella flexneri serotype 5b (strain 8401).